The chain runs to 337 residues: Methylthioribose-1-phosphate isomerase (337 aa).

Substrate-binding positions include R51–A53, R88, and Q187. D228 acts as the Proton donor in catalysis. A substrate-binding site is contributed by N238–K239.

It belongs to the eIF-2B alpha/beta/delta subunits family. MtnA subfamily.

The enzyme catalyses 5-(methylsulfanyl)-alpha-D-ribose 1-phosphate = 5-(methylsulfanyl)-D-ribulose 1-phosphate. It functions in the pathway amino-acid biosynthesis; L-methionine biosynthesis via salvage pathway; L-methionine from S-methyl-5-thio-alpha-D-ribose 1-phosphate: step 1/6. Functionally, catalyzes the interconversion of methylthioribose-1-phosphate (MTR-1-P) into methylthioribulose-1-phosphate (MTRu-1-P). This chain is Methylthioribose-1-phosphate isomerase, found in Anaeromyxobacter sp. (strain Fw109-5).